Here is a 1247-residue protein sequence, read N- to C-terminus: uncharacterized protein (1247 aa).

8 disordered regions span residues 25–141 (KYNN…HSPP), 169–431 (AANN…QQPQ), 472–667 (QQQP…PSSS), 738–770 (NSNS…SEPI), 807–857 (YSNR…QNIE), 869–1087 (GKNF…NNNN), 1099–1122 (STLN…ESQQ), and 1139–1162 (QQQQ…KGDG). Positions 26-125 (YNNSNNYNNN…SNNSINSNSY (100 aa)) are enriched in low complexity. Over residues 126–139 (KVNTPTQNGKSSHS) the composition is skewed to polar residues. Low complexity-rich tracts occupy residues 169-178 (AANNGSSNSS), 185-223 (SNSN…NYNS), and 230-341 (NNNN…YSNS). A compositionally biased stretch (polar residues) spans 342–356 (KYNQQKSYNNAPHQL). 4 stretches are compositionally biased toward low complexity: residues 363 to 375 (NSYY…NNGN), 385 to 394 (GSGNSSNSNG), 409 to 431 (QSQS…QQPQ), and 472 to 484 (QQQP…QQQQ). The span at 511-522 (GLNNSLNGQTDL) shows a compositional bias: polar residues. Low complexity-rich tracts occupy residues 523 to 544 (NNSN…TNNN), 553 to 628 (YNYN…VGSN), 655 to 667 (TPSS…PSSS), 738 to 759 (NSNS…NNNH), 807 to 855 (YSNR…DSQN), and 871 to 928 (NFNN…ENNN). Over residues 929 to 942 (GDVFSNGFSTWTPK) the composition is skewed to polar residues. Residues 943-983 (SGSNSLNNSQNNLSNGQNSSNNSQNNLNNSQNSLNSSGNHH) are compositionally biased toward low complexity. Residues 984-995 (SNYHGHNNHHHY) are compositionally biased toward basic residues. Positions 996-1021 (NNNNNNNNNNNNNNNNNNNNNNNGNG) are enriched in low complexity. Residues 1026–1044 (YYNNKYQQKSPQHQSSNSV) are compositionally biased toward polar residues. Residues 1047 to 1060 (IPPPGFSTIAPPPG) show a composition bias toward pro residues. The segment covering 1064-1087 (NNNNNNNNNNNNNNNKNNNSNNNN) has biased composition (low complexity). Residues 1099 to 1108 (STLNNSQDDS) are compositionally biased toward polar residues. Residues 1110–1122 (QQEQEQQEQESQQ) show a composition bias toward low complexity.

This is an uncharacterized protein from Dictyostelium discoideum (Social amoeba).